The primary structure comprises 96 residues: Large ribosomal subunit protein bL28 (96 aa).

The segment covering 1–22 (MSRSCELTGKGVQSGNNVSHAN) has biased composition (polar residues). The segment at 1-24 (MSRSCELTGKGVQSGNNVSHANNK) is disordered.

This sequence belongs to the bacterial ribosomal protein bL28 family.

The protein is Large ribosomal subunit protein bL28 of Sinorhizobium medicae (strain WSM419) (Ensifer medicae).